The following is a 471-amino-acid chain: Protein translocase subunit SecF (471 aa).

The interval 1–29 (MVSRAKVGAETTKGIDEPDRNDNTDDNGA) is disordered. Positions 13-23 (KGIDEPDRNDN) are enriched in basic and acidic residues. Transmembrane regions (helical) follow at residues 88-108 (GGVIVAVAVLSIIVRGFTFGI), 211-231 (ITKKVVIALVVFLVLVGLYIT), 242-262 (ALTTMCFDLTVTAGVYSLVGF), 267-287 (ATVIGLLTILGFSLYDTVIVF), 325-345 (LISVLPVLALMVVAVWLLGVG), and 355-375 (LVGIIVGTYSSIFFATPLLVT). The interval 393–471 (RRTLGSQVGK…TGKRNNVGRR (79 aa)) is disordered. Polar residues predominate over residues 415-431 (KPQNQAESCADASSQEG). Residues 448–460 (PGVRPVRPTGTRR) show a composition bias toward low complexity. Over residues 461 to 471 (PTGKRNNVGRR) the composition is skewed to basic residues.

This sequence belongs to the SecD/SecF family. SecF subfamily. As to quaternary structure, forms a complex with SecD. Part of the essential Sec protein translocation apparatus which comprises SecA, SecYEG and auxiliary proteins SecDF. Other proteins may also be involved.

The protein localises to the cell membrane. In terms of biological role, part of the Sec protein translocase complex. Interacts with the SecYEG preprotein conducting channel. SecDF uses the proton motive force (PMF) to complete protein translocation after the ATP-dependent function of SecA. This Mycobacterium leprae (strain TN) protein is Protein translocase subunit SecF.